A 507-amino-acid chain; its full sequence is Cytochrome P450 monooxygenase ptmU (507 aa).

Residues 4-24 traverse the membrane as a helical segment; the sequence is VNAWWVGGSLLLGIWAIVVFF. 3 N-linked (GlcNAc...) asparagine glycosylation sites follow: asparagine 98, asparagine 202, and asparagine 398. Cysteine 444 is a binding site for heme.

The protein belongs to the cytochrome P450 family. Heme serves as cofactor.

It localises to the membrane. It functions in the pathway secondary metabolite biosynthesis. Cytochrome P450 monooxygenase; part of the gene cluster that mediates the biosynthesis of the indole diterpenes penitrems. The geranylgeranyl diphosphate (GGPP) synthase ptmG catalyzes the first step in penitrem biosynthesis via conversion of farnesyl pyrophosphate and isopentyl pyrophosphate into geranylgeranyl pyrophosphate (GGPP). Condensation of indole-3-glycerol phosphate with GGPP by the prenyl transferase ptmC then forms 3-geranylgeranylindole (3-GGI). Epoxidation by the FAD-dependent monooxygenase ptmM leads to a epoxidized-GGI that is substrate of the terpene cyclase ptmB for cyclization to yield paspaline. Paspaline is subsequently converted to 13-desoxypaxilline by the cytochrome P450 monooxygenase ptmP, the latter being then converted to paxilline by the cytochrome P450 monooxygenase ptmQ. Paxilline is converted to beta-paxitriol via C-10 ketoreduction by the short-chain dehydrogenase ptmH which can be monoprenylated at the C-20 by the indole diterpene prenyltransferase ptmD. A two-step elimination (acetylation and elimination) process performed by the O-acetyltransferase ptmV and ptmI leads to the production of the prenylated form of penijanthine. The FAD-linked oxidoreductase ptmO then converts the prenylated form of penijanthine into PC-M5 which is in turn transformed into PC-M4 by the aromatic dimethylallyltransferase ptmE. Five sequential oxidative transformations performed by the cytochrome P450 monooxygenases ptmK, ptmU, ptmL, ptmN and ptmJ yield the various penitrem compounds. PtmK, ptmU and ptmM are involved in the formation of the key bicyclic ring of penitrem C via the formation of the intermediates secopenitrem D and penitrem D. PtmL catalyzes the epoxidation of penitrem D and C to yield penitrem B and F, respectively. PtmJ catalyzes the last benzylic hydroxylation to convert penitrem B to prenitrem E and penitrem F to penitrem A. In Penicillium ochrochloron, this protein is Cytochrome P450 monooxygenase ptmU.